Consider the following 631-residue polypeptide: Glutamine--fructose-6-phosphate aminotransferase [isomerizing] (631 aa).

The active-site Nucleophile; for GATase activity is the Cys-2. A Glutamine amidotransferase type-2 domain is found at 2-225 (CGIVGYIGTQ…NGEIARLTPL (224 aa)). SIS domains lie at 298-446 (LDPQ…QRHS) and 480-621 (LAHE…VDQP). Lys-626 (for Fru-6P isomerization activity) is an active-site residue.

In terms of assembly, homodimer.

The protein resides in the cytoplasm. The enzyme catalyses D-fructose 6-phosphate + L-glutamine = D-glucosamine 6-phosphate + L-glutamate. In terms of biological role, catalyzes the first step in hexosamine metabolism, converting fructose-6P into glucosamine-6P using glutamine as a nitrogen source. The polypeptide is Glutamine--fructose-6-phosphate aminotransferase [isomerizing] (Synechocystis sp. (strain ATCC 27184 / PCC 6803 / Kazusa)).